A 60-amino-acid polypeptide reads, in one-letter code: Large ribosomal subunit protein uL30 (60 aa).

The protein belongs to the universal ribosomal protein uL30 family. In terms of assembly, part of the 50S ribosomal subunit.

This chain is Large ribosomal subunit protein uL30, found in Shewanella denitrificans (strain OS217 / ATCC BAA-1090 / DSM 15013).